Reading from the N-terminus, the 115-residue chain is Holo-[acyl-carrier-protein] synthase (115 aa).

Mg(2+) is bound by residues aspartate 6 and glutamate 51.

This sequence belongs to the P-Pant transferase superfamily. AcpS family. Mg(2+) is required as a cofactor.

The protein localises to the cytoplasm. The catalysed reaction is apo-[ACP] + CoA = holo-[ACP] + adenosine 3',5'-bisphosphate + H(+). In terms of biological role, transfers the 4'-phosphopantetheine moiety from coenzyme A to a Ser of acyl-carrier-protein. The chain is Holo-[acyl-carrier-protein] synthase from Campylobacter jejuni subsp. jejuni serotype O:2 (strain ATCC 700819 / NCTC 11168).